Consider the following 588-residue polypeptide: Sulfite reductase [NADPH] hemoprotein beta-component (588 aa).

C443, C449, C488, and C492 together coordinate [4Fe-4S] cluster. C492 is a siroheme binding site.

Belongs to the nitrite and sulfite reductase 4Fe-4S domain family. In terms of assembly, alpha(8)-beta(8). The alpha component is a flavoprotein, the beta component is a hemoprotein. The cofactor is siroheme. It depends on [4Fe-4S] cluster as a cofactor.

It carries out the reaction hydrogen sulfide + 3 NADP(+) + 3 H2O = sulfite + 3 NADPH + 4 H(+). Its pathway is sulfur metabolism; hydrogen sulfide biosynthesis; hydrogen sulfide from sulfite (NADPH route): step 1/1. Component of the sulfite reductase complex that catalyzes the 6-electron reduction of sulfite to sulfide. This is one of several activities required for the biosynthesis of L-cysteine from sulfate. This is Sulfite reductase [NADPH] hemoprotein beta-component from Actinobacillus succinogenes (strain ATCC 55618 / DSM 22257 / CCUG 43843 / 130Z).